The following is a 359-amino-acid chain: MDKPHIQIMSIWLIVSTLLLLLMIVVGGITRLTNAGLSIVEWNPVSGIIPPISSEDWNNEFNKYTASPEFNLINNQITISEFKYIFFIEYIHRLLGRITGIIIIIPFLIFYYLKSLTKLQCYRLLLITCLVIIQGFMGWYMVKSGLKDTPYINHCRLAGHLLLAVVIYHQLIAELLIIIQPFKCYMLATSKANNSNSTSINVINLKTKLIVLNKIIIFLLYTQIMFGALVAGLDAGLIYNEFPNMGDSLIPIEILNQSIDFTMFDNQVLMQFIHRWFGILISCLIICYAIWLIILNKQALRGMGMVAACLVLVQVTTGIITLVYHVPILAALTHQVGAILILTTFLFIQNIVTNFELLH.

5 consecutive transmembrane segments (helical) span residues 8–28 (IMSI…VVGG), 94–114 (LLGR…YYLK), 124–144 (LLLI…MVKS), 159–179 (GHLL…LIII), and 215–235 (IIIF…GLDA). Histidine 274 is a heme binding site. The next 3 membrane-spanning stretches (helical) occupy residues 276-296 (WFGI…IILN), 303-323 (MGMV…ITLV), and 328-348 (ILAA…FLFI). A heme-binding site is contributed by histidine 334.

Belongs to the COX15/CtaA family. Type 2 subfamily. In terms of assembly, interacts with CtaB. It depends on heme b as a cofactor.

The protein resides in the cell membrane. The catalysed reaction is Fe(II)-heme o + 2 A + H2O = Fe(II)-heme a + 2 AH2. It functions in the pathway porphyrin-containing compound metabolism; heme A biosynthesis; heme A from heme O: step 1/1. In terms of biological role, catalyzes the conversion of heme O to heme A by two successive hydroxylations of the methyl group at C8. The first hydroxylation forms heme I, the second hydroxylation results in an unstable dihydroxymethyl group, which spontaneously dehydrates, resulting in the formyl group of heme A. This Orientia tsutsugamushi (strain Ikeda) (Rickettsia tsutsugamushi) protein is Heme A synthase.